Consider the following 307-residue polypeptide: Glycine--tRNA ligase alpha subunit (307 aa).

The protein belongs to the class-II aminoacyl-tRNA synthetase family. As to quaternary structure, tetramer of two alpha and two beta subunits.

It localises to the cytoplasm. It carries out the reaction tRNA(Gly) + glycine + ATP = glycyl-tRNA(Gly) + AMP + diphosphate. The chain is Glycine--tRNA ligase alpha subunit from Aeromonas hydrophila subsp. hydrophila (strain ATCC 7966 / DSM 30187 / BCRC 13018 / CCUG 14551 / JCM 1027 / KCTC 2358 / NCIMB 9240 / NCTC 8049).